The primary structure comprises 553 residues: MKKGSAVIKTLRVILSALALCVATSSAHAADTKKVDVLLVGGGIMSSTLGVWLHELQPDWSMTMVERLDGVALESSNGWNNAGTGHSALAELNYTPEKADGKIDISKAIEINESFQISRQFWAWQVKQGVLKNPHSFINSTPHMSFVWGDDNVRFLKKRYEALQASPLFRGMQYSEDYDQIKQWVPLMMEGRDPKQKVAATWTPIGTDVNFGEITRQFVGYLKTQPNFTLSLSSEVREISRNADGTWHVSWVKLHSDEPAQSVDAKFVFIGAGGGALHLLQASGVPEAKDYGAFPVGGSFLVTENPEVVKQHLAKAYGKASVGSPPMSVPHLDTRIIDGKKIILFGPFATFSTKFLKNGSYFDLLKSTNTHNVAPMMRVGVDEFPLVQYLAGQLMLSDDDRFNALKEYFPNAKKEDWRLWQAGQRVQIIKRDPVKGGVLKLGTEIVASQDGSIAGLLGASPGASTAAPIMLNLMKKVFKDKVATPEWQQKIRQIVPSYGTKLNDSPAKVVEEWTYTSDVLQLSPPPKIDVNTPSQATGTAPARPAKASADMAL.

The tract at residues 524 to 553 is disordered; that stretch reads PPPKIDVNTPSQATGTAPARPAKASADMAL.

The protein belongs to the MQO family. FAD serves as cofactor.

It catalyses the reaction (S)-malate + a quinone = a quinol + oxaloacetate. The protein operates within carbohydrate metabolism; tricarboxylic acid cycle; oxaloacetate from (S)-malate (quinone route): step 1/1. This chain is Probable malate:quinone oxidoreductase, found in Burkholderia lata (strain ATCC 17760 / DSM 23089 / LMG 22485 / NCIMB 9086 / R18194 / 383).